Reading from the N-terminus, the 844-residue chain is Translation initiation factor IF-2 (844 aa).

The span at 120–132 (RNSVNLVQPQQEK) shows a compositional bias: polar residues. The disordered stretch occupies residues 120–220 (RNSVNLVQPQ…SGKGFKKANP (101 aa)). The span at 161-175 (DEEKSSEDKSTESKN) shows a compositional bias: basic and acidic residues. Residues 205–219 (SKAKKASGKGFKKAN) are compositionally biased toward basic residues. The tr-type G domain occupies 343-510 (SRAPVVTIMG…AVLLQSEVLE (168 aa)). The segment at 352-359 (GHVDHGKT) is G1. 352–359 (GHVDHGKT) is a binding site for GTP. Positions 377 to 381 (GITQH) are G2. The G3 stretch occupies residues 398–401 (DTPG). GTP contacts are provided by residues 398-402 (DTPGH) and 452-455 (NKID). A G4 region spans residues 452-455 (NKID). The segment at 488–490 (SAK) is G5.

This sequence belongs to the TRAFAC class translation factor GTPase superfamily. Classic translation factor GTPase family. IF-2 subfamily.

It is found in the cytoplasm. Functionally, one of the essential components for the initiation of protein synthesis. Protects formylmethionyl-tRNA from spontaneous hydrolysis and promotes its binding to the 30S ribosomal subunits. Also involved in the hydrolysis of GTP during the formation of the 70S ribosomal complex. This chain is Translation initiation factor IF-2, found in Francisella philomiragia subsp. philomiragia (strain ATCC 25017 / CCUG 19701 / FSC 153 / O#319-036).